Consider the following 222-residue polypeptide: Exosome complex component Rrp4 (222 aa).

An S1 motif domain is found at 63 to 131 (GDLVIGRVTG…EINRVKLTLR (69 aa)).

Belongs to the RRP4 family. In terms of assembly, component of the archaeal exosome complex. Forms a trimer of Rrp4 and/or Csl4 subunits. The trimer associates with a hexameric ring-like arrangement composed of 3 Rrp41-Rrp42 heterodimers.

It localises to the cytoplasm. In terms of biological role, non-catalytic component of the exosome, which is a complex involved in RNA degradation. Increases the RNA binding and the efficiency of RNA degradation. Confers strong poly(A) specificity to the exosome. The sequence is that of Exosome complex component Rrp4 from Methanosphaera stadtmanae (strain ATCC 43021 / DSM 3091 / JCM 11832 / MCB-3).